The sequence spans 372 residues: Heat-inducible transcription repressor HrcA (372 aa).

This sequence belongs to the HrcA family.

Its function is as follows. Negative regulator of class I heat shock genes (grpE-dnaK-dnaJ and groELS operons). Prevents heat-shock induction of these operons. In Chloroflexus aurantiacus (strain ATCC 29366 / DSM 635 / J-10-fl), this protein is Heat-inducible transcription repressor HrcA.